A 269-amino-acid polypeptide reads, in one-letter code: Shikimate dehydrogenase (NADP(+)) (269 aa).

Shikimate contacts are provided by residues S15–S17 and T62. K66 serves as the catalytic Proton acceptor. The shikimate site is built by N86 and D99. NADP(+) contacts are provided by residues G123–A127, N146–K151, and L213. Y215 is a shikimate binding site. G236 contributes to the NADP(+) binding site.

The protein belongs to the shikimate dehydrogenase family. Homodimer.

The catalysed reaction is shikimate + NADP(+) = 3-dehydroshikimate + NADPH + H(+). Its pathway is metabolic intermediate biosynthesis; chorismate biosynthesis; chorismate from D-erythrose 4-phosphate and phosphoenolpyruvate: step 4/7. Functionally, involved in the biosynthesis of the chorismate, which leads to the biosynthesis of aromatic amino acids. Catalyzes the reversible NADPH linked reduction of 3-dehydroshikimate (DHSA) to yield shikimate (SA). The polypeptide is Shikimate dehydrogenase (NADP(+)) (Methanocella arvoryzae (strain DSM 22066 / NBRC 105507 / MRE50)).